Here is a 437-residue protein sequence, read N- to C-terminus: Ribosomal protein uS12 methylthiotransferase RimO (437 aa).

In terms of domain architecture, MTTase N-terminal spans 4–114 (PRVSFVSLGC…VMAAVHEAAP (111 aa)). Residues Cys-13, Cys-49, Cys-78, Cys-145, Cys-149, and Cys-152 each contribute to the [4Fe-4S] cluster site. The Radical SAM core domain occupies 131–369 (LTPRHYAYLK…MQRQQKISAT (239 aa)). In terms of domain architecture, TRAM spans 372-437 (AKKVGKRLPV…DAYDLYGSAV (66 aa)).

It belongs to the methylthiotransferase family. RimO subfamily. It depends on [4Fe-4S] cluster as a cofactor.

It localises to the cytoplasm. It catalyses the reaction L-aspartate(89)-[ribosomal protein uS12]-hydrogen + (sulfur carrier)-SH + AH2 + 2 S-adenosyl-L-methionine = 3-methylsulfanyl-L-aspartate(89)-[ribosomal protein uS12]-hydrogen + (sulfur carrier)-H + 5'-deoxyadenosine + L-methionine + A + S-adenosyl-L-homocysteine + 2 H(+). Catalyzes the methylthiolation of an aspartic acid residue of ribosomal protein uS12. The chain is Ribosomal protein uS12 methylthiotransferase RimO from Mesorhizobium japonicum (strain LMG 29417 / CECT 9101 / MAFF 303099) (Mesorhizobium loti (strain MAFF 303099)).